The following is a 309-amino-acid chain: uncharacterized protein (309 aa).

The helical transmembrane segment at 23–43 (ALVLSSIVNILLLLLIYSTVF) threads the bilayer.

Belongs to the chlamydial CPn_0593/CT_474/TC_0759 family.

Its subcellular location is the membrane. This is an uncharacterized protein from Chlamydia trachomatis serovar D (strain ATCC VR-885 / DSM 19411 / UW-3/Cx).